A 245-amino-acid polypeptide reads, in one-letter code: Phosphoadenosine 5'-phosphosulfate reductase (245 aa).

Cys239 functions as the Nucleophile; cysteine thiosulfonate intermediate in the catalytic mechanism.

This sequence belongs to the PAPS reductase family. CysH subfamily.

It localises to the cytoplasm. It carries out the reaction [thioredoxin]-disulfide + sulfite + adenosine 3',5'-bisphosphate + 2 H(+) = [thioredoxin]-dithiol + 3'-phosphoadenylyl sulfate. It participates in sulfur metabolism; hydrogen sulfide biosynthesis; sulfite from sulfate: step 3/3. Its function is as follows. Catalyzes the formation of sulfite from phosphoadenosine 5'-phosphosulfate (PAPS) using thioredoxin as an electron donor. This is Phosphoadenosine 5'-phosphosulfate reductase from Shewanella oneidensis (strain ATCC 700550 / JCM 31522 / CIP 106686 / LMG 19005 / NCIMB 14063 / MR-1).